The primary structure comprises 61 residues: uncharacterized protein (61 aa).

An N-terminal signal peptide occupies residues 1–30 (MDVEVANMAAKLRVRGLKLPNAIVVSTAIL).

This is an uncharacterized protein from Archaeoglobus fulgidus (strain ATCC 49558 / DSM 4304 / JCM 9628 / NBRC 100126 / VC-16).